The chain runs to 132 residues: MGLIVYYSSATGNTEYFVSQLDQRLFKIDKKKPSMLVDEPYVLVVPTYADGEGKMAVPKAVIRFLNEDENRKLIRGVIGGGNRNFGRYYSLASKIIAEKCFVPCLYRFELRGTEEDIICVKKGLERFWKQLV.

It belongs to the NrdI family.

In terms of biological role, probably involved in ribonucleotide reductase function. This chain is Protein NrdI, found in Bartonella henselae (strain ATCC 49882 / DSM 28221 / CCUG 30454 / Houston 1) (Rochalimaea henselae).